The following is a 326-amino-acid chain: 4-hydroxythreonine-4-phosphate dehydrogenase (326 aa).

H134 and T135 together coordinate substrate. Residues H164, H209, and H264 each coordinate a divalent metal cation. The substrate site is built by K272, N281, and R290.

This sequence belongs to the PdxA family. As to quaternary structure, homodimer. Zn(2+) serves as cofactor. The cofactor is Mg(2+). It depends on Co(2+) as a cofactor.

It localises to the cytoplasm. The enzyme catalyses 4-(phosphooxy)-L-threonine + NAD(+) = 3-amino-2-oxopropyl phosphate + CO2 + NADH. It functions in the pathway cofactor biosynthesis; pyridoxine 5'-phosphate biosynthesis; pyridoxine 5'-phosphate from D-erythrose 4-phosphate: step 4/5. Functionally, catalyzes the NAD(P)-dependent oxidation of 4-(phosphooxy)-L-threonine (HTP) into 2-amino-3-oxo-4-(phosphooxy)butyric acid which spontaneously decarboxylates to form 3-amino-2-oxopropyl phosphate (AHAP). This chain is 4-hydroxythreonine-4-phosphate dehydrogenase, found in Colwellia psychrerythraea (strain 34H / ATCC BAA-681) (Vibrio psychroerythus).